The following is a 104-amino-acid chain: UPF0212 protein PH1312 (104 aa).

This sequence belongs to the UPF0212 family.

The chain is UPF0212 protein PH1312 from Pyrococcus horikoshii (strain ATCC 700860 / DSM 12428 / JCM 9974 / NBRC 100139 / OT-3).